The following is a 397-amino-acid chain: Probable pyruvate dehydrogenase E1 component subunit alpha, mitochondrial (397 aa).

Residues H86, Y112, R113, G159, V161, D190, G191, A192, and N219 each contribute to the pyruvate site. Residues Y112, R113, G159, V161, D190, G191, A192, N219, and H286 each contribute to the thiamine diphosphate site. Residue D190 participates in Mg(2+) binding. Mg(2+) is bound at residue N219.

Tetramer of 2 alpha and 2 beta subunits. The cofactor is thiamine diphosphate. Requires Mg(2+) as cofactor.

The protein localises to the mitochondrion matrix. It catalyses the reaction N(6)-[(R)-lipoyl]-L-lysyl-[protein] + pyruvate + H(+) = N(6)-[(R)-S(8)-acetyldihydrolipoyl]-L-lysyl-[protein] + CO2. E1 activity is regulated by phosphorylation (inactivation) and dephosphorylation (activation) of the alpha subunit. Functionally, the pyruvate dehydrogenase complex catalyzes the overall conversion of pyruvate to acetyl-CoA and CO(2). It contains multiple copies of three enzymatic components: pyruvate dehydrogenase (E1), dihydrolipoamide acetyltransferase (E2) and lipoamide dehydrogenase (E3). The sequence is that of Probable pyruvate dehydrogenase E1 component subunit alpha, mitochondrial from Caenorhabditis elegans.